The primary structure comprises 283 residues: Tyrosine recombinase THA_404 (283 aa).

Positions 1 to 86 (MDKVIEMFSD…SLNSFFNYLE (86 aa)) constitute a Core-binding (CB) domain. Positions 107–281 (KIPDFLTEDE…ADQEKFDAVK (175 aa)) constitute a Tyr recombinase domain. Catalysis depends on residues Arg145, Lys170, His233, Arg236, and His259. Catalysis depends on Tyr268, which acts as the O-(3'-phospho-DNA)-tyrosine intermediate.

The protein belongs to the 'phage' integrase family.

The protein localises to the cytoplasm. Site-specific tyrosine recombinase, which acts by catalyzing the cutting and rejoining of the recombining DNA molecules. This is Tyrosine recombinase THA_404 from Thermosipho africanus (strain TCF52B).